Here is a 649-residue protein sequence, read N- to C-terminus: Replication factor C small subunit (649 aa).

An ATP-binding site is contributed by 55-385; that stretch reads GPAGVGKCVT…GCIPTVMHNT (331 aa).

It belongs to the activator 1 small subunits family. RfcS subfamily. In terms of assembly, heteromultimer composed of small subunits (RfcS) and large subunits (RfcL). Post-translationally, this protein undergoes a protein self splicing that involves a post-translational excision of the intervening region (intein) followed by peptide ligation.

Functionally, part of the RFC clamp loader complex which loads the PCNA sliding clamp onto DNA. The polypeptide is Replication factor C small subunit (rfcS) (Haloquadratum walsbyi (strain DSM 16790 / HBSQ001)).